We begin with the raw amino-acid sequence, 262 residues long: Small ribosomal subunit protein uS2 (262 aa).

Belongs to the universal ribosomal protein uS2 family.

The chain is Small ribosomal subunit protein uS2 from Borreliella burgdorferi (strain ZS7) (Borrelia burgdorferi).